Consider the following 105-residue polypeptide: UPF0045 protein ECM15 (105 aa).

This sequence belongs to the UPF0045 family.

This is UPF0045 protein ECM15 (ECM15) from Eremothecium gossypii (strain ATCC 10895 / CBS 109.51 / FGSC 9923 / NRRL Y-1056) (Yeast).